The following is a 290-amino-acid chain: Elongation factor Ts (290 aa).

The involved in Mg(2+) ion dislocation from EF-Tu stretch occupies residues 83–86 (TDFV).

The protein belongs to the EF-Ts family.

It localises to the cytoplasm. Associates with the EF-Tu.GDP complex and induces the exchange of GDP to GTP. It remains bound to the aminoacyl-tRNA.EF-Tu.GTP complex up to the GTP hydrolysis stage on the ribosome. The chain is Elongation factor Ts (tsf) from Aquifex aeolicus (strain VF5).